The primary structure comprises 165 residues: ADP-ribosylation factor-like protein 3 (165 aa).

Residue G2 is the site of N-myristoyl glycine attachment. A Phosphoserine modification is found at S5. GTP-binding positions include 24 to 31, 67 to 71, and 109 to 112; these read GLDNAGKT, DIGGQ, and NKQD.

The protein belongs to the small GTPase superfamily. Arf family. Found in a complex with ARL3, RP2 and UNC119 (or UNC119B); RP2 induces hydrolysis of GTP ARL3 in the complex, leading to the release of UNC119 (or UNC119B). Interacts with RP2; interaction is direct and stimulated with the activated GTP-bound form of ARL3. Interacts with SYS1. Interacts with ARL2BP; the GTP-bound form interacts with ARL2BP. Microtubule-associated protein. Does not interact with TBCC. Interacts with RP2. Interacts with PDE6D; the interaction occurs specifically with the GTP-bound form of ARL3. Interacts with GGA1; the interaction recruits PKD1:PKD2 complex to trans-Golgi network and is required for ciliary targeting of PKD1:PKD2 complex. Interacts with DNAAF9.

Its subcellular location is the golgi apparatus membrane. It localises to the cytoplasm. The protein resides in the cytoskeleton. The protein localises to the spindle. It is found in the nucleus. Its subcellular location is the microtubule organizing center. It localises to the centrosome. The protein resides in the cell projection. The protein localises to the cilium. Small GTP-binding protein which cycles between an inactive GDP-bound and an active GTP-bound form, and the rate of cycling is regulated by guanine nucleotide exchange factors (GEF) and GTPase-activating proteins (GAP). Required for normal cytokinesis and cilia signaling. Requires assistance from GTPase-activating proteins (GAPs) like RP2 and PDE6D, in order to cycle between inactive GDP-bound and active GTP-bound forms. Required for targeting proteins to the cilium, including myristoylated NPHP3 and prenylated INPP5E. Targets NPHP3 to the ciliary membrane by releasing myristoylated NPHP3 from UNC119B cargo adapter into the cilium. Required for PKD1:PKD2 complex targeting from the trans-Golgi network to the cilium. In Pongo abelii (Sumatran orangutan), this protein is ADP-ribosylation factor-like protein 3 (ARL3).